A 238-amino-acid chain; its full sequence is DNA repair protein RecO (238 aa).

It belongs to the RecO family.

Functionally, involved in DNA repair and RecF pathway recombination. This chain is DNA repair protein RecO, found in Aliivibrio salmonicida (strain LFI1238) (Vibrio salmonicida (strain LFI1238)).